We begin with the raw amino-acid sequence, 420 residues long: Sulfate adenylyltransferase (420 aa).

It belongs to the sulfate adenylyltransferase family.

The catalysed reaction is sulfate + ATP + H(+) = adenosine 5'-phosphosulfate + diphosphate. It participates in sulfur metabolism; hydrogen sulfide biosynthesis; sulfite from sulfate: step 1/3. The sequence is that of Sulfate adenylyltransferase from Desulforudis audaxviator (strain MP104C).